A 264-amino-acid chain; its full sequence is Phosphatidylglycerol--prolipoprotein diacylglyceryl transferase (264 aa).

The next 7 helical transmembrane spans lie at 14-34 (IIFS…LIGF), 60-80 (LIYT…VFFY), 98-118 (GGMS…WVSF), 128-148 (ADFI…GNFI), 176-196 (SQLY…NWFI), 203-223 (GSVA…VEYV), and 240-260 (GQLL…WAYS). Arginine 143 contacts a 1,2-diacyl-sn-glycero-3-phospho-(1'-sn-glycerol).

It belongs to the Lgt family.

It is found in the cell inner membrane. It carries out the reaction L-cysteinyl-[prolipoprotein] + a 1,2-diacyl-sn-glycero-3-phospho-(1'-sn-glycerol) = an S-1,2-diacyl-sn-glyceryl-L-cysteinyl-[prolipoprotein] + sn-glycerol 1-phosphate + H(+). It functions in the pathway protein modification; lipoprotein biosynthesis (diacylglyceryl transfer). Functionally, catalyzes the transfer of the diacylglyceryl group from phosphatidylglycerol to the sulfhydryl group of the N-terminal cysteine of a prolipoprotein, the first step in the formation of mature lipoproteins. The sequence is that of Phosphatidylglycerol--prolipoprotein diacylglyceryl transferase from Actinobacillus pleuropneumoniae serotype 7 (strain AP76).